The primary structure comprises 247 residues: Adenosylcobinamide-GDP ribazoletransferase (247 aa).

5 helical membrane-spanning segments follow: residues 34–54 (IITF…VFMV), 59–79 (CGVP…TGGF), 113–133 (GGLA…ELAL), 138–158 (ILAS…LLMY), and 194–214 (VLLP…AIFI).

It belongs to the CobS family. Mg(2+) is required as a cofactor.

It is found in the cell inner membrane. It catalyses the reaction alpha-ribazole + adenosylcob(III)inamide-GDP = adenosylcob(III)alamin + GMP + H(+). It carries out the reaction alpha-ribazole 5'-phosphate + adenosylcob(III)inamide-GDP = adenosylcob(III)alamin 5'-phosphate + GMP + H(+). It participates in cofactor biosynthesis; adenosylcobalamin biosynthesis; adenosylcobalamin from cob(II)yrinate a,c-diamide: step 7/7. In terms of biological role, joins adenosylcobinamide-GDP and alpha-ribazole to generate adenosylcobalamin (Ado-cobalamin). Also synthesizes adenosylcobalamin 5'-phosphate from adenosylcobinamide-GDP and alpha-ribazole 5'-phosphate. The chain is Adenosylcobinamide-GDP ribazoletransferase from Escherichia coli O7:K1 (strain IAI39 / ExPEC).